A 431-amino-acid polypeptide reads, in one-letter code: UDP-N-acetylglucosamine 1-carboxyvinyltransferase (431 aa).

Position 22–23 (22–23 (KN)) interacts with phosphoenolpyruvate. UDP-N-acetyl-alpha-D-glucosamine is bound at residue arginine 92. The active-site Proton donor is the aspartate 116. UDP-N-acetyl-alpha-D-glucosamine-binding positions include 121–125 (RPIDQ), aspartate 307, and isoleucine 330.

This sequence belongs to the EPSP synthase family. MurA subfamily.

The protein resides in the cytoplasm. The enzyme catalyses phosphoenolpyruvate + UDP-N-acetyl-alpha-D-glucosamine = UDP-N-acetyl-3-O-(1-carboxyvinyl)-alpha-D-glucosamine + phosphate. It functions in the pathway cell wall biogenesis; peptidoglycan biosynthesis. Functionally, cell wall formation. Adds enolpyruvyl to UDP-N-acetylglucosamine. This Lactobacillus acidophilus (strain ATCC 700396 / NCK56 / N2 / NCFM) protein is UDP-N-acetylglucosamine 1-carboxyvinyltransferase.